Here is a 105-residue protein sequence, read N- to C-terminus: UPF0060 membrane protein Ajs_1326 (105 aa).

The next 4 helical transmembrane spans lie at 4–24 (FALF…PYLW), 30–50 (SAWL…LLTL), 60–80 (AAYG…VDGI), and 82–102 (PTAW…LIMF).

It belongs to the UPF0060 family.

It is found in the cell inner membrane. The sequence is that of UPF0060 membrane protein Ajs_1326 from Acidovorax sp. (strain JS42).